A 293-amino-acid chain; its full sequence is Cell wall protein PGA31 (293 aa).

Positions 1–18 (MKFLTAASLLTLSSSALA) are cleaved as a signal peptide. N131 carries an N-linked (GlcNAc...) asparagine glycan. The interval 161 to 187 (ESASSSSSSAAPEPTASSSEAPKETPV) is disordered. Residues 163-180 (ASSSSSSAAPEPTASSSE) show a composition bias toward low complexity. N-linked (GlcNAc...) asparagine glycosylation is present at N190. Residues 233–262 (VPSKTASSEAAPPKTTVDSVSKPAPSGKKP) are disordered. Residue G271 is the site of GPI-anchor amidated glycine attachment. Residues 272 to 293 (AANALTGGSVAIAVAAAIGLVF) constitute a propeptide, removed in mature form.

The protein belongs to the SRP1/TIP1 family. The GPI-anchor is attached to the protein in the endoplasmic reticulum and serves to target the protein to the cell surface. There, the glucosamine-inositol phospholipid moiety is cleaved off and the GPI-modified mannoprotein is covalently attached via its lipidless GPI glycan remnant to the 1,6-beta-glucan of the outer cell wall layer.

The protein resides in the secreted. Its subcellular location is the cell wall. It localises to the membrane. Component of the cell wall involved in virulence which plays a role in the relationship between C.albicans and the host. Involved in the regulation or assembly of chitin within the cell wall. This chain is Cell wall protein PGA31 (PGA31), found in Candida albicans (strain SC5314 / ATCC MYA-2876) (Yeast).